The primary structure comprises 510 residues: Pre-glycoprotein polyprotein GP complex (510 aa).

Residue G2 is the site of N-myristoyl glycine; by host attachment. The Extracellular portion of the chain corresponds to 2–17 (GQFITLMQSIPEALNM). Residues 18–32 (AFNVALVIVSLLCVT) traverse the membrane as a helical segment. Residue K33 is a topological domain, cytoplasmic. The helical transmembrane segment at 34–53 (GLINLWKCGIIQLLMFLALA) threads the bilayer. Extracellular-side segments run 54–58 (GRSCD) and 59–448 (GEYK…ALAD). C57 provides a ligand contact to Zn(2+). N-linked (GlcNAc...) asparagine; by host glycosylation is found at N75, N90, N101, N112, N117, N122, N133, N182, N218, and N243. 4 disulfides stabilise this stretch: C87–C250, C295–C308, C317–C326, and C380–C401. N-linked (GlcNAc...) asparagine; by host glycosylation is found at N381, N389, N406, and N411. The chain crosses the membrane as a helical span at residues 449–469 (LCFWSLVFFTTTVFFQLIGIP). At 470–510 (THRHLIGEGCPKPHRLTSNSLCSCGFYKIPKKPFRWVRKGK) the chain is on the cytoplasmic side. Zn(2+) is bound by residues H471, H473, C479, H483, C491, and C493.

Belongs to the arenaviridae GPC protein family. Homotetramer; disulfide-linked. As to quaternary structure, homotetramer. GP2 homotetramers bind through ionic interactions with GP1 homotetramers to form the GP complex together with the stable signal peptide. The GP-C polyprotein interacts with the host protease MBTPS1/SKI-1 resulting in the polyprotein processing. In terms of processing, specific enzymatic cleavages in vivo yield mature proteins. GP-C polyprotein is cleaved in the endoplasmic reticulum by the host protease MBTPS1. Only cleaved glycoprotein is incorporated into virions. The SSP remains stably associated with the GP complex following cleavage by signal peptidase and plays crucial roles in the trafficking of GP through the secretory pathway. Post-translationally, myristoylation is necessary for GP2-mediated fusion activity.

Its subcellular location is the virion membrane. The protein resides in the host endoplasmic reticulum membrane. It is found in the host Golgi apparatus membrane. It localises to the host cell membrane. Class I viral fusion protein that directs fusion of viral and host endosomal membranes, leading to delivery of the nucleocapsid into the cytoplasm. Membrane fusion is mediated by irreversible conformational changes induced upon acidification in the endosome. Functionally, stable signal peptide (SSP): cleaved and functions as a signal peptide. In addition, it is also retained as the third component of the GP complex. The SSP is required for efficient glycoprotein expression, post-translational maturation cleavage of GP1 and GP2, glycoprotein transport to the cell surface plasma membrane, formation of infectious virus particles, and acid pH-dependent glycoprotein-mediated cell fusion. Its function is as follows. Interacts with the host receptor. This Pirital mammarenavirus (isolate Rat/Venezuela/VAV-488/1995) (PIRV) protein is Pre-glycoprotein polyprotein GP complex.